A 241-amino-acid chain; its full sequence is ATP synthase subunit a (241 aa).

A run of 5 helical transmembrane segments spans residues 30–50 (GQVF…ISLG), 91–111 (FIGT…LIPW), 128–148 (INTT…AGLS), 193–213 (LVVG…VMFL), and 214–234 (GLFT…YYIG).

This sequence belongs to the ATPase A chain family. F-type ATPases have 2 components, CF(1) - the catalytic core - and CF(0) - the membrane proton channel. CF(1) has five subunits: alpha(3), beta(3), gamma(1), delta(1), epsilon(1). CF(0) has four main subunits: a, b, b' and c.

The protein localises to the cellular thylakoid membrane. In terms of biological role, key component of the proton channel; it plays a direct role in the translocation of protons across the membrane. The polypeptide is ATP synthase subunit a (Prochlorococcus marinus (strain MIT 9515)).